A 618-amino-acid chain; its full sequence is Pyocin-S1 (618 aa).

The protein belongs to the colicin/pyosin nuclease family. In terms of assembly, purified pyocin S1 makes up a complex of the two (large and small) proteins. The large protein, but not the pyocin complex, shows in vitro DNase activity.

In terms of biological role, causes breakdown of chromosomal DNA as well as complete inhibition of lipid synthesis in sensitive cells. This Pseudomonas aeruginosa protein is Pyocin-S1 (pys1).